The following is a 93-amino-acid chain: Cell division topological specificity factor (93 aa).

The protein belongs to the MinE family.

Prevents the cell division inhibition by proteins MinC and MinD at internal division sites while permitting inhibition at polar sites. This ensures cell division at the proper site by restricting the formation of a division septum at the midpoint of the long axis of the cell. This is Cell division topological specificity factor from Syntrophus aciditrophicus (strain SB).